The primary structure comprises 452 residues: UDP-N-acetylmuramoylalanine--D-glutamate ligase (452 aa).

119-125 (GSNGKTT) provides a ligand contact to ATP.

This sequence belongs to the MurCDEF family.

Its subcellular location is the cytoplasm. It carries out the reaction UDP-N-acetyl-alpha-D-muramoyl-L-alanine + D-glutamate + ATP = UDP-N-acetyl-alpha-D-muramoyl-L-alanyl-D-glutamate + ADP + phosphate + H(+). Its pathway is cell wall biogenesis; peptidoglycan biosynthesis. Cell wall formation. Catalyzes the addition of glutamate to the nucleotide precursor UDP-N-acetylmuramoyl-L-alanine (UMA). The chain is UDP-N-acetylmuramoylalanine--D-glutamate ligase from Streptococcus pyogenes serotype M12 (strain MGAS9429).